A 628-amino-acid chain; its full sequence is Eukaryotic peptide chain release factor GTP-binding subunit ERF3B (628 aa).

Residues 1–10 (MDSGSSSSDS) are compositionally biased toward low complexity. 3 disordered regions span residues 1-44 (MDSG…REPL), 71-124 (SFLR…LEGS), and 146-191 (LEES…KSKS). Residues 201–425 (KEHVNVVFIG…YLDNLPNFNR (225 aa)) form the tr-type G domain. The interval 210 to 217 (GHVDAGKS) is G1. 213-218 (DAGKST) lines the GTP pocket. Positions 266–270 (GKTVE) are G2. The G3 stretch occupies residues 287 to 290 (DAPG). Residues 349–352 (NKMD) and 391–393 (SGL) each bind GTP. Residues 349–352 (NKMD) are G4. A G5 region spans residues 391–393 (SGL).

It belongs to the TRAFAC class translation factor GTPase superfamily. Classic translation factor GTPase family. ERF3 subfamily. Component of the eRF1-eRF3-GTP ternary complex, composed of ETF1/ERF1 and ERF3 (GSPT1/ERF3A or GSPT2/ERF3B) and GTP. Component of the transient SURF (SMG1-UPF1-eRF1-eRF3) complex. Interacts with UPF1 and PABPC1.

It is found in the cytoplasm. The catalysed reaction is GTP + H2O = GDP + phosphate + H(+). GTPase component of the eRF1-eRF3-GTP ternary complex, a ternary complex that mediates translation termination in response to the termination codons UAA, UAG and UGA. GSPT2/ERF3B mediates ETF1/ERF1 delivery to stop codons: The eRF1-eRF3-GTP complex binds to a stop codon in the ribosomal A-site. GTP hydrolysis by GSPT2/ERF3B induces a conformational change that leads to its dissociation, permitting ETF1/ERF1 to accommodate fully in the A-site. Component of the transient SURF complex which recruits UPF1 to stalled ribosomes in the context of nonsense-mediated decay (NMD) of mRNAs containing premature stop codons. The chain is Eukaryotic peptide chain release factor GTP-binding subunit ERF3B (GSPT2) from Pongo abelii (Sumatran orangutan).